The primary structure comprises 132 residues: Small ribosomal subunit protein uS8c (132 aa).

This sequence belongs to the universal ribosomal protein uS8 family. As to quaternary structure, part of the 30S ribosomal subunit.

Its subcellular location is the plastid. The protein resides in the chloroplast. One of the primary rRNA binding proteins, it binds directly to 16S rRNA central domain where it helps coordinate assembly of the platform of the 30S subunit. The polypeptide is Small ribosomal subunit protein uS8c (rps8) (Guillardia theta (Cryptophyte)).